We begin with the raw amino-acid sequence, 902 residues long: U3 small nucleolar RNA-associated protein 21 homolog (902 aa).

14 WD repeats span residues D40–V71, T80–D110, T119–T154, T164–E198, G206–K243, L249–T284, F289–N332, S339–E373, T399–V438, V447–S481, V492–D528, I533–L568, G570–S611, and P613–S651.

As to quaternary structure, interacts with snoRNA U3. Interacts with MPP10. Component of the ribosomal small subunit (SSU) processome composed of at least 40 protein subunits and snoRNA U3.

It localises to the nucleus. The protein resides in the nucleolus. Involved in nucleolar processing of pre-18S ribosomal RNA and ribosome assembly. This is U3 small nucleolar RNA-associated protein 21 homolog from Schizosaccharomyces pombe (strain 972 / ATCC 24843) (Fission yeast).